The sequence spans 179 residues: Probable galaptin lec-7 (179 aa).

The 128-residue stretch at Ser-11–Lys-138 folds into the Galectin domain.

The polypeptide is Probable galaptin lec-7 (lec-7) (Caenorhabditis elegans).